Here is a 397-residue protein sequence, read N- to C-terminus: Protein WRKY1 (397 aa).

The WRKY DNA-binding region spans Lys-326–Val-392.

The protein belongs to the WRKY group II-d family. Interacts with RS2. In terms of tissue distribution, more abundant in apices and young leaf primordia than in fully expanded leaf tissues.

Its subcellular location is the nucleus. Transcription factor. Interacts specifically with the W box (5'-(T)TGAC[CT]-3'), a frequently occurring elicitor-responsive cis-acting element. In Zea mays (Maize), this protein is Protein WRKY1.